Consider the following 146-residue polypeptide: Hemoglobin subunit beta (146 aa).

Residues 2–146 (HWSAEEKQLI…VAHALARKYH (145 aa)) enclose the Globin domain. Heme b is bound by residues H63 and H92.

The protein belongs to the globin family. As to quaternary structure, heterotetramer of two alpha chains and two beta chains. Red blood cells.

Involved in oxygen transport from the lung to the various peripheral tissues. This Anseranas semipalmata (Magpie goose) protein is Hemoglobin subunit beta (HBB).